Consider the following 352-residue polypeptide: Quinolinate synthase (352 aa).

Iminosuccinate is bound by residues His48 and Ser69. Residue Cys114 coordinates [4Fe-4S] cluster. Residues 140–142 (YAN) and Ser157 contribute to the iminosuccinate site. Cys201 provides a ligand contact to [4Fe-4S] cluster. Iminosuccinate-binding positions include 227 to 229 (HPE) and Thr244. [4Fe-4S] cluster is bound at residue Cys298.

The protein belongs to the quinolinate synthase family. Type 1 subfamily. Requires [4Fe-4S] cluster as cofactor.

It localises to the cytoplasm. The catalysed reaction is iminosuccinate + dihydroxyacetone phosphate = quinolinate + phosphate + 2 H2O + H(+). The protein operates within cofactor biosynthesis; NAD(+) biosynthesis; quinolinate from iminoaspartate: step 1/1. Catalyzes the condensation of iminoaspartate with dihydroxyacetone phosphate to form quinolinate. The sequence is that of Quinolinate synthase from Ectopseudomonas mendocina (strain ymp) (Pseudomonas mendocina).